We begin with the raw amino-acid sequence, 1116 residues long: ELKS/Rab6-interacting/CAST family member 1 (1116 aa).

Positions 1–54 (MYGSARSVGKVEPSSQSPGRSPRLPRSPRLGHRRTNSTGGSSGSSVGGGSGKTL) are disordered. Lys-10 carries the N6-acetyllysine modification. Low complexity predominate over residues 13 to 28 (PSSQSPGRSPRLPRSP). A phosphoserine mark is found at Ser-17, Ser-21, and Ser-37. Residue Thr-38 is modified to Phosphothreonine. A compositionally biased stretch (gly residues) spans 40–51 (GSSGSSVGGGSG). 3 positions are modified to phosphoserine: Ser-55, Ser-75, and Ser-94. Residues 144–988 (RQARDNTIMD…RMKLMADNYE (845 aa)) are a coiled coil. The segment covering 590 to 602 (KEKQMSSLKERVK) has biased composition (basic and acidic residues). 2 disordered regions span residues 590 to 609 (KEKQ…ADTT) and 814 to 836 (ARRR…RKKD). Ser-1005 is modified (phosphoserine). Position 1046 is a phosphothreonine (Thr-1046). Residues 1046 to 1108 (TPPASYNLDD…DHCPDILEQV (63 aa)) form the FIP-RBD domain. Positions 1060–1100 (WENELQKMTRGQLQDELEKGERDNAELQEFANAILQQIADH) form a coiled coil.

As to quaternary structure, part of a complex with CHUK, IKBKB and IKBKG. Interacts with CHUK, IKBKB and IKBKG. The interaction with IKBKG is independent of CHUK and IKBKB. Interacts with NFKBIA. Isoform 4 interacts with PPFIA1, and through its C-terminus with the PDZ domains of RIMS1 and RIMS2. Interacts with ERC2/CAST1. Interacts with the GTB-bound forms of RAB6A isoform 1 and isoform 2 and with RAB6B. The interaction was strongest with RAB6B, followed by RAB6A isoform 2 and weakest with RAB6A isoform 1. Interacts with SDCCAG8. Part of a cortical microtubule stabilization complex (CMSC) composed of KANK1, PPFIA1, PPFIBP1, ERC1/ELKS, PHLDB2/LL5beta, CLASPs, KIF21A and possibly additional interactors; within CMSCs KANK1 and PHLDB2/LL5beta appear to be the core components for targeting of microtubule-binding proteins KIF21A and CLASPs, whereas PPFIA1, PPFIBP1 and ERC1/ELKS serve as scaffolds for protein clustering. In terms of tissue distribution, widely expressed. Isoform 2 and isoform 4 are abundantly expressed in brain. Isoform 1 and isoform 3 are predominantly expressed in testis and thyroid, and isoform 1 predominates in other tissues tested.

Its subcellular location is the cytoplasm. The protein resides in the cytoskeleton. It localises to the microtubule organizing center. The protein localises to the centrosome. It is found in the membrane. Its subcellular location is the golgi apparatus membrane. The protein resides in the presynaptic cell membrane. It localises to the cell projection. The protein localises to the podosome. Regulatory subunit of the IKK complex. Probably recruits IkappaBalpha/NFKBIA to the complex. May be involved in the organization of the cytomatrix at the nerve terminals active zone (CAZ) which regulates neurotransmitter release. May be involved in vesicle trafficking at the CAZ. May be involved in Rab-6 regulated endosomes to Golgi transport. The chain is ELKS/Rab6-interacting/CAST family member 1 (ERC1) from Homo sapiens (Human).